A 135-amino-acid chain; its full sequence is Large ribosomal subunit protein eL32 (135 aa).

K9 is covalently cross-linked (Glycyl lysine isopeptide (Lys-Gly) (interchain with G-Cter in SUMO2)). K50 carries the post-translational modification N6-succinyllysine. S62 is modified (phosphoserine).

This sequence belongs to the eukaryotic ribosomal protein eL32 family. In terms of assembly, component of the large ribosomal subunit.

The protein resides in the cytoplasm. Its function is as follows. Component of the large ribosomal subunit. The ribosome is a large ribonucleoprotein complex responsible for the synthesis of proteins in the cell. The polypeptide is Large ribosomal subunit protein eL32 (RPL32) (Oryctolagus cuniculus (Rabbit)).